The following is a 286-amino-acid chain: Phospholipase A1 (286 aa).

An N-terminal signal peptide occupies residues 1–20; it reads MRISLACLAALCALPAGVMA. Over 21-49 the chain is Periplasmic; sequence QDASVHDKPAVRGSIIANLLQDHDNPFLL. Residues 50 to 62 form a beta stranded membrane-spanning segment; sequence YPYESNYLLYTWT. At 63 to 81 the chain is on the extracellular side; that stretch reads SDLNKEAIRSYDWAENARK. Residues 82–96 traverse the membrane as a beta stranded segment; it reads DEVKFQLSLAFPLWR. Residues 97–102 are Periplasmic-facing; that stretch reads GILGDN. A beta stranded membrane pass occupies residues 103-115; the sequence is SLLGASYTQKSWW. Topologically, residues 116-125 are extracellular; sequence QLSNSKESAP. Residue Ser123 coordinates Ca(2+). Residues 126 to 145 form a beta stranded membrane-spanning segment; sequence FRETNYEPQLFLGFATDYQF. The Periplasmic portion of the chain corresponds to 146–147; sequence AG. The chain crosses the membrane as a beta stranded span at residues 148–161; sequence WTLRDIEMGYNHDS. The active-site Proton acceptor is the His159. Ser161 serves as the catalytic Nucleophile. The Extracellular segment spans residues 162-170; it reads NGRSDPTSR. 2 residues coordinate Ca(2+): Arg164 and Ser169. Residues 171-183 form a beta stranded membrane-spanning segment; it reads SWNRLYARLMAQN. Topologically, residues 184–185 are periplasmic; the sequence is GN. A beta stranded membrane pass occupies residues 186–195; that stretch reads WLVEVKPWYV. Over 196–213 the chain is Extracellular; sequence VGSTDDNPDITKYMGYYR. Residue Asp201 coordinates Ca(2+). Residues 214–220 form a beta stranded membrane-spanning segment; the sequence is LKVGYQL. The Periplasmic segment spans residues 221–222; the sequence is GE. A beta stranded transmembrane segment spans residues 223 to 231; it reads AILSAQGQY. The Extracellular segment spans residues 232–238; the sequence is NWNTGYG. A beta stranded membrane pass occupies residues 239-247; that stretch reads GAELGVSYP. At 248-252 the chain is on the periplasmic side; it reads ITKHV. A beta stranded transmembrane segment spans residues 253 to 262; it reads RAYTQIYSGY. Topologically, residues 263–271 are extracellular; that stretch reads GESLIDYNF. The beta stranded transmembrane segment at 272-283 threads the bilayer; it reads NQTRVGVGLMLN. At 284-286 the chain is on the periplasmic side; it reads DLF.

This sequence belongs to the phospholipase A1 family. In terms of assembly, homodimer; dimerization is reversible, and the dimeric form is the active one. It depends on Ca(2+) as a cofactor.

It localises to the cell outer membrane. It catalyses the reaction a 1,2-diacyl-sn-glycero-3-phosphocholine + H2O = a 2-acyl-sn-glycero-3-phosphocholine + a fatty acid + H(+). The enzyme catalyses a 1,2-diacyl-sn-glycero-3-phosphocholine + H2O = a 1-acyl-sn-glycero-3-phosphocholine + a fatty acid + H(+). In terms of biological role, hydrolysis of phosphatidylcholine with phospholipase A2 (EC 3.1.1.4) and phospholipase A1 (EC 3.1.1.32) activities. The protein is Phospholipase A1 (pldA) of Klebsiella pneumoniae.